Consider the following 327-residue polypeptide: Ran-specific GTPase-activating protein 2 (327 aa).

2 disordered regions span residues 1 to 96 (MSET…KKED) and 109 to 205 (GFGV…KQEV). The segment covering 24–83 (PIDKLDGTPKRPREKDQDEQAEETSDKSEAPNKNDEEKKEEGKKDQEPSHKKIKVDDGKT) has biased composition (basic and acidic residues). Threonine 31 is subject to Phosphothreonine. The segment covering 122 to 133 (ATTSTESLPASD) has biased composition (polar residues). Low complexity predominate over residues 140–152 (FAFGSGLSFGSGF). 2 stretches are compositionally biased toward basic and acidic residues: residues 157-179 (NKTE…KVHS) and 189-205 (EDTK…KQEV). A Phosphoserine modification is found at serine 179. Residues 191–327 (TKDKPKPLKL…YNIIVKSVPK (137 aa)) enclose the RanBD1 domain.

As to quaternary structure, interacts with GSP1, XPO1 and SRM1.

Its subcellular location is the nucleus. In terms of biological role, important for the export of protein containing nuclear export signal (NES) out of the nucleus. Stimulates the GTPase activity of GSP1. This chain is Ran-specific GTPase-activating protein 2 (YRB2), found in Saccharomyces cerevisiae (strain ATCC 204508 / S288c) (Baker's yeast).